The following is a 515-amino-acid chain: G-protein coupled receptor 176 (515 aa).

The Extracellular portion of the chain corresponds to 1–41; sequence MGHNSSWVSPNTSHPRNTSGAEAGANLSAFGELSEAQLYRQ. Asparagine 4, asparagine 11, asparagine 17, and asparagine 26 each carry an N-linked (GlcNAc...) asparagine glycan. Residues 42-64 traverse the membrane as a helical segment; that stretch reads FTTTVQVVIFIGSLLGNFMVLWS. The Cytoplasmic portion of the chain corresponds to 65-77; the sequence is TCRTTVFKSVTNR. The helical transmembrane segment at 78–98 threads the bilayer; that stretch reads FIKNLACSGICASVVCVPFDI. Over 99–108 the chain is Extracellular; it reads ILSSSPHCCW. Residues 109-129 traverse the membrane as a helical segment; that stretch reads WIYTMLFCKVLKFLHKVFCSV. Residues 130 to 157 lie on the Cytoplasmic side of the membrane; sequence TVLSFPAIALDRYYSVLYPLERKISDAK. The helical transmembrane segment at 158–177 threads the bilayer; that stretch reads SRELVMYIWAHAVVASVPVF. Topologically, residues 178 to 204 are extracellular; the sequence is AVTNVADIYAMSTCTEVWSNSLGHLVY. Residues 205–225 traverse the membrane as a helical segment; it reads VLIYNVTTVIVPVAVVFLFLI. The Cytoplasmic segment spans residues 226–264; sequence LIRRALSASQKKKVIIAALRTPQNTISIPYASQREAELH. Residues 265–285 form a helical membrane-spanning segment; it reads ATLLSMVTVFILCSVPYATLV. The Extracellular portion of the chain corresponds to 286–301; it reads VYQTVLNVPNTSVFLL. Residues 302–322 form a helical membrane-spanning segment; the sequence is LTAIWLPKVSLLANPVLFLTV. Residues 323–515 are Cytoplasmic-facing; sequence NKSVRKCLVG…KVSIFPKVDS (193 aa). The tract at residues 407–435 is disordered; it reads SCPEGEQEPPQLAPSVPPPGTVDSEPRVS. The segment covering 417-426 has biased composition (pro residues); it reads QLAPSVPPPG.

Belongs to the G-protein coupled receptor 1 family. As to expression, expressed mainly in the brain, with prominent expression in the SCN (at protein level).

It is found in the cell membrane. Functionally, orphan receptor involved in normal circadian rhythm behavior. Acts through the G-protein subclass G(z)-alpha and has an agonist-independent basal activity to repress cAMP production. This is G-protein coupled receptor 176 (Gpr176) from Mus musculus (Mouse).